The following is a 403-amino-acid chain: Poly(rC)-binding protein 4 (403 aa).

KH domains are found at residues 17–67, 101–154, and 241–293; these read TLTL…TITG, PVTL…TVSG, and TSSQ…TITG.

It is found in the cytoplasm. Its function is as follows. Single-stranded nucleic acid binding protein that binds preferentially to oligo dC. The chain is Poly(rC)-binding protein 4 (PCBP4) from Bos taurus (Bovine).